Here is a 274-residue protein sequence, read N- to C-terminus: Eukaryotic translation initiation factor 3 subunit J (274 aa).

Disordered stretches follow at residues 1-120 and 227-246; these read MSGK…DLKH and EEKAAEKGGKKSKAAKTKTS. Over residues 30 to 50 the composition is skewed to acidic residues; the sequence is DEEGNESDVLDSWDAAEDSEV. Residues 46 to 112 are a coiled coil; the sequence is EDSEVEREKA…AERRERLRRE (67 aa). Composition is skewed to basic and acidic residues over residues 51–67 and 79–92; these read EREKAKKAAEAKAKAEA and RIAERQAERARQLA. Residues 93-102 show a composition bias toward acidic residues; the sequence is EDSDAEEETE. Residues 103-120 are compositionally biased toward basic and acidic residues; the sequence is AERRERLRREQKESDLKH.

It belongs to the eIF-3 subunit J family. As to quaternary structure, component of the eukaryotic translation initiation factor 3 (eIF-3) complex.

Its subcellular location is the cytoplasm. Functionally, component of the eukaryotic translation initiation factor 3 (eIF-3) complex, which is involved in protein synthesis of a specialized repertoire of mRNAs and, together with other initiation factors, stimulates binding of mRNA and methionyl-tRNAi to the 40S ribosome. The eIF-3 complex specifically targets and initiates translation of a subset of mRNAs involved in cell proliferation. The protein is Eukaryotic translation initiation factor 3 subunit J (hcr-1) of Neurospora crassa (strain ATCC 24698 / 74-OR23-1A / CBS 708.71 / DSM 1257 / FGSC 987).